We begin with the raw amino-acid sequence, 510 residues long: Probable sphingolipid transporter spinster homolog 3 (510 aa).

Residues 44 to 64 (SSLSPVWLLVIFCIINLLNYM) traverse the membrane as a helical segment. Residues Asn75 and Asn98 are each glycosylated (N-linked (GlcNAc...) asparagine). Helical transmembrane passes span 106–126 (VLSSSFMVGLLIASPIFASLA), 136–156 (VWTIAVLGCGSSFAFWFIVLC), 158–178 (MFVGVGEASFISLAAPFIDDN), 185–205 (AAWLGLFYMCIPSGVALGYVY), 219–239 (FWGEAVLMAPFAVLGFLMKPL), 298–318 (VFVVNVLGYVSYNFVIGAYSY), 336–356 (IFGAVTIICGIVGTLSGGFIL), 369–387 (LLSGATFLGAVFCFTAFTL), 392–414 (GFIALFALGELLVFATQAPVNYV), 430–450 (ISTVAIHIFGDVPSSPLVGIV), and 462–482 (LILTSILFLAAAIWFIGKINL).

This sequence belongs to the major facilitator superfamily. Spinster (TC 2.A.1.49) family.

It localises to the mitochondrion inner membrane. In terms of biological role, probable sphingolipid transporter. The sequence is that of Probable sphingolipid transporter spinster homolog 3 from Arabidopsis thaliana (Mouse-ear cress).